Here is a 199-residue protein sequence, read N- to C-terminus: Putative DNA-directed RNA polymerase subunit L376 (199 aa).

It belongs to the eukaryotic RPB7/RPC8 RNA polymerase subunit family.

It localises to the virion. It catalyses the reaction RNA(n) + a ribonucleoside 5'-triphosphate = RNA(n+1) + diphosphate. In Acanthamoeba polyphaga (Amoeba), this protein is Putative DNA-directed RNA polymerase subunit L376.